Here is a 302-residue protein sequence, read N- to C-terminus: Myeloid-associated differentiation marker-like protein 2 (302 aa).

MARVEL domains follow at residues 13–149 (AIWS…AKPG) and 154–298 (YMAT…RLRI). A run of 7 helical transmembrane segments spans residues 45–65 (AYGT…ILIV), 87–107 (AYAM…PMYF), 124–144 (LAVS…VFLT), 158–178 (ASGL…GALA), 191–211 (WCVA…ILNI), 225–245 (FVVI…VIWP), and 273–293 (LAVT…LIYT).

Belongs to the MAL family.

The protein resides in the membrane. The chain is Myeloid-associated differentiation marker-like protein 2 (myadml2) from Xenopus laevis (African clawed frog).